We begin with the raw amino-acid sequence, 67 residues long: Probable pilin MJ1400 (67 aa).

A propeptide spanning residues 1 to 13 (MKFIMKFIKSNKG) is cleaved from the precursor. Residues 14 to 22 (QISLEFSLL) carry the QXSXEXXXL motif.

The N-terminus is cleaved by the prepilin peptidase EppA, which recognizes the class III signal sequence.

The protein localises to the secreted. The protein resides in the cell surface. Its subcellular location is the fimbrium. The protein is Probable pilin MJ1400 of Methanocaldococcus jannaschii (strain ATCC 43067 / DSM 2661 / JAL-1 / JCM 10045 / NBRC 100440) (Methanococcus jannaschii).